The primary structure comprises 342 residues: UDP-xylose transporter 1 (342 aa).

The next 10 helical transmembrane spans lie at 7–27, 36–56, 75–95, 100–120, 132–152, 154–174, 184–204, 221–241, 250–270, and 280–300; these read MQMG…SIVI, LGFP…YCTL, VVLF…SLGF, FYQM…TLFL, LFLL…LNFV, SVLS…TNTI, QLLY…GPFV, IVVG…FSTF, VTYQ…GYTL, and IAGI…CSVA. The disordered stretch occupies residues 305–342; the sequence is QASSDSTFLGKDRDTTPLLGQENENHHEAKKLDKHSPV. Positions 327–342 are enriched in basic and acidic residues; it reads NENHHEAKKLDKHSPV.

It belongs to the TPT transporter family. TPT (TC 2.A.7.9) subfamily. In terms of tissue distribution, ubiquitous.

The protein resides in the golgi apparatus membrane. Its subcellular location is the endoplasmic reticulum membrane. Functionally, nucleotide-sugar transporter that transports UDP-xylose and UMP in a strict counter-exchange mode. The protein is UDP-xylose transporter 1 of Arabidopsis thaliana (Mouse-ear cress).